Here is a 203-residue protein sequence, read N- to C-terminus: Dual-action ribosomal maturation protein DarP (203 aa).

Disordered stretches follow at residues 1–31 and 182–203; these read MPPM…SKSQ and GGAS…DDEA. Positions 186 to 203 are enriched in acidic residues; that stretch reads DSDDEAADDAGDDHDDEA.

It belongs to the DarP family.

The protein resides in the cytoplasm. Its function is as follows. Member of a network of 50S ribosomal subunit biogenesis factors which assembles along the 30S-50S interface, preventing incorrect 23S rRNA structures from forming. Promotes peptidyl transferase center (PTC) maturation. This Burkholderia cenocepacia (strain HI2424) protein is Dual-action ribosomal maturation protein DarP.